A 161-amino-acid polypeptide reads, in one-letter code: Globin CTT-VIIB-10 (161 aa).

A signal peptide spans 1 to 16; that stretch reads MKFFAVLALCIVGAIA. In terms of domain architecture, Globin spans 18–161; sequence PLTADEASLV…NTFAIVVPRL (144 aa). Histidine 76 and histidine 111 together coordinate heme b.

Belongs to the globin family. As to quaternary structure, homodimer.

This chain is Globin CTT-VIIB-10 (CTT-7B10), found in Chironomus thummi thummi (Midge).